The sequence spans 388 residues: Chorismate synthase (388 aa).

2 residues coordinate NADP(+): Arg39 and Arg45. Residues 132-134, 251-252, Gly296, 311-315, and Arg337 each bind FMN; these read RSS, NA, and KPIPT.

As to quaternary structure, homotetramer. Requires FMNH2 as cofactor.

The enzyme catalyses 5-O-(1-carboxyvinyl)-3-phosphoshikimate = chorismate + phosphate. Its pathway is metabolic intermediate biosynthesis; chorismate biosynthesis; chorismate from D-erythrose 4-phosphate and phosphoenolpyruvate: step 7/7. Its function is as follows. Catalyzes the anti-1,4-elimination of the C-3 phosphate and the C-6 proR hydrogen from 5-enolpyruvylshikimate-3-phosphate (EPSP) to yield chorismate, which is the branch point compound that serves as the starting substrate for the three terminal pathways of aromatic amino acid biosynthesis. This reaction introduces a second double bond into the aromatic ring system. In Staphylococcus aureus, this protein is Chorismate synthase.